A 375-amino-acid polypeptide reads, in one-letter code: MSVATLSAPEKTRVIVGMSGGVDSSVSALLLLEQGYQVEGLFMKNWEEDDGTEYCTAKEDLADAQAVCDRIGIKLHTANFAAEYWDNVFEHFLAEYKAGRTPNPDILCNREIKFKAFLDYALMLGADLIATGHYVRRRDRDGRSELLKGLDPNKDQSYFLHAVGGEQLAKTLFPVGELEKPEVRAIAEKHSLATAKKKDSTGICFIGERRFSDFLKQYLPAQPGNIEAVDGEVIGRHHGLMYHTIGQRQGLGIGGLKDASDEPWYVLSKDLQRNVLIVGQGNDHPWLFSRALLASEIYWVNPVDLSAPLKLTAKVRYRQSDQACTLEQTSDGYRAVFEVPQRAVTPGQSVVFYDGEVCLGGGVIEQAEPWFEGRA.

Residues 17 to 24 (GMSGGVDS) and M43 each bind ATP. Residues 103-105 (NPD) are interaction with target base in tRNA. Catalysis depends on C108, which acts as the Nucleophile. C108 and C204 are oxidised to a cystine. G132 contributes to the ATP binding site. The interaction with tRNA stretch occupies residues 154–156 (KDQ). Catalysis depends on C204, which acts as the Cysteine persulfide intermediate. The segment at 316–317 (RY) is interaction with tRNA.

It belongs to the MnmA/TRMU family.

The protein resides in the cytoplasm. The catalysed reaction is S-sulfanyl-L-cysteinyl-[protein] + uridine(34) in tRNA + AH2 + ATP = 2-thiouridine(34) in tRNA + L-cysteinyl-[protein] + A + AMP + diphosphate + H(+). In terms of biological role, catalyzes the 2-thiolation of uridine at the wobble position (U34) of tRNA, leading to the formation of s(2)U34. The protein is tRNA-specific 2-thiouridylase MnmA of Stutzerimonas stutzeri (strain A1501) (Pseudomonas stutzeri).